The chain runs to 609 residues: Numb-like protein (609 aa).

5 disordered regions span residues 1 to 68 (MSRS…QWQA), 223 to 283 (GSFR…PVAA), 372 to 421 (ASAG…EEVS), 434 to 464 (QQQQ…QPFP), and 537 to 609 (AGAF…EIEL). Over residues 19 to 29 (PPAPCGAPGPP) the composition is skewed to pro residues. Residues 74–223 (RKGTCSFPVR…ASRTSFAREG (150 aa)) form the PID domain. Residues serine 224 and serine 228 each carry the phosphoserine modification. The segment covering 233-245 (PAEREAPDKKKAE) has biased composition (basic and acidic residues). Over residues 246-259 (AAAAPTVAPGPAQP) the composition is skewed to low complexity. Serine 263 is modified (phosphoserine). A Phosphothreonine modification is found at threonine 279. Basic and acidic residues predominate over residues 409–418 (TPSEAERWLE). Position 411 is a phosphoserine (serine 411). A compositionally biased stretch (low complexity) spans 434–446 (QQQQQQQQQQQQQ). Pro residues-rich tracts occupy residues 454 to 464 (PTMPPALQPFP) and 558 to 573 (NGAP…PAPE).

In terms of assembly, interacts (via PTB domain) with MAP3K7IP2 (via C-terminal). Interacts (via C-terminal) with TRAF6 (via TRAF domains). Associates with EPS15 and NOTCH1.

The protein localises to the cytoplasm. Plays a role in the process of neurogenesis. Required throughout embryonic neurogenesis to maintain neural progenitor cells, also called radial glial cells (RGCs), by allowing their daughter cells to choose progenitor over neuronal cell fate. Not required for the proliferation of neural progenitor cells before the onset of embryonic neurogenesis. Also required postnatally in the subventricular zone (SVZ) neurogenesis by regulating SVZ neuroblasts survival and ependymal wall integrity. Negative regulator of NF-kappa-B signaling pathway. The inhibition of NF-kappa-B activation is mediated at least in part, by preventing MAP3K7IP2 to interact with polyubiquitin chains of TRAF6 and RIPK1 and by stimulating the 'Lys-48'-linked polyubiquitination and degradation of TRAF6 in cortical neurons. In Homo sapiens (Human), this protein is Numb-like protein (NUMBL).